The chain runs to 363 residues: Spindle pole body component SPC42 (363 aa).

The stretch at 60 to 137 forms a coiled coil; sequence EFINKAVQQN…ANSTFKEMRF (78 aa). The tract at residues 160 to 184 is disordered; that stretch reads PKHRAPDATGNPRTTNKVSNTSDQD. Over residues 170–182 the composition is skewed to polar residues; the sequence is NPRTTNKVSNTSD. 4 positions are modified to phosphoserine: S213, S217, S284, and S329. A coiled-coil region spans residues 249-298; sequence DIMMYESAELKRVEEEIEELKRKILVRKKHDLRKLSLNNQLQELQSMMDG. The tract at residues 310–363 is disordered; it reads HNHATHRHSSQSSRDYSPSSDACLECSNDLYEKNRVKPENNMSETFATPTPNNR. Over residues 319–329 the composition is skewed to low complexity; sequence SQSSRDYSPSS. Polar residues predominate over residues 349–363; that stretch reads NNMSETFATPTPNNR.

Belongs to the SPC42 family. In terms of assembly, component of the SPC110 complex containing at least CMD1, SPC29, SPC42 and SCP110.

It localises to the nucleus. The protein resides in the cytoplasm. The protein localises to the cytoskeleton. It is found in the microtubule organizing center. Its subcellular location is the spindle pole body. Functionally, forms a polymeric layer at the periphery of the spindle pole body (SPB) central plaque which has an essential function during SPB duplication and may facilitate attachment of the SPB to the nuclear membrane. The chain is Spindle pole body component SPC42 (SPC42) from Saccharomyces cerevisiae (strain ATCC 204508 / S288c) (Baker's yeast).